We begin with the raw amino-acid sequence, 383 residues long: D-alanine--D-alanine ligase (383 aa).

One can recognise an ATP-grasp domain in the interval 164 to 373 (KLAFQAAGLE…YSALIDELIT (210 aa)). ATP is bound at residue 196 to 251 (VAELGFPVFVKPARAGSSFGITRVDEPSQLDAAIATAREHDLKLVVEAGIDGREIE). 3 residues coordinate Mg(2+): Asp327, Glu340, and Asn342.

Belongs to the D-alanine--D-alanine ligase family. It depends on Mg(2+) as a cofactor. Requires Mn(2+) as cofactor.

Its subcellular location is the cytoplasm. The enzyme catalyses 2 D-alanine + ATP = D-alanyl-D-alanine + ADP + phosphate + H(+). The protein operates within cell wall biogenesis; peptidoglycan biosynthesis. Functionally, cell wall formation. The polypeptide is D-alanine--D-alanine ligase (Kocuria rhizophila (strain ATCC 9341 / DSM 348 / NBRC 103217 / DC2201)).